Reading from the N-terminus, the 531-residue chain is Putative aldehyde dehydrogenase family 7 member A1 homolog (531 aa).

NAD(+) is bound at residue 264-269 (GSSEIG). Glu286 (proton acceptor) is an active-site residue. The Nucleophile role is filled by Cys320.

Belongs to the aldehyde dehydrogenase family. Homotetramer.

It carries out the reaction an aldehyde + NAD(+) + H2O = a carboxylate + NADH + 2 H(+). This is Putative aldehyde dehydrogenase family 7 member A1 homolog (alh-9) from Caenorhabditis elegans.